The sequence spans 322 residues: Large ribosomal subunit protein uL15m (322 aa).

A mitochondrion-targeting transit peptide spans Met1 to Tyr57. The segment at Gly69–Arg99 is disordered. Residues Pro81–Gln93 show a composition bias toward gly residues.

The protein belongs to the universal ribosomal protein uL15 family. As to quaternary structure, component of the mitochondrial large ribosomal subunit (mt-LSU). Mature yeast 74S mitochondrial ribosomes consist of a small (37S) and a large (54S) subunit. The 37S small subunit contains a 15S ribosomal RNA (15S mt-rRNA) and 34 different proteins. The 54S large subunit contains a 21S rRNA (21S mt-rRNA) and 46 different proteins.

The protein localises to the mitochondrion. In terms of biological role, component of the mitochondrial ribosome (mitoribosome), a dedicated translation machinery responsible for the synthesis of mitochondrial genome-encoded proteins, including at least some of the essential transmembrane subunits of the mitochondrial respiratory chain. The mitoribosomes are attached to the mitochondrial inner membrane and translation products are cotranslationally integrated into the membrane. This is Large ribosomal subunit protein uL15m (MRPL10) from Saccharomyces cerevisiae (strain ATCC 204508 / S288c) (Baker's yeast).